The sequence spans 557 residues: Myo-inositol transporter 2 (557 aa).

Over 1-76 (MDFNNIPLAT…ENGEGFEAEK (76 aa)) the chain is Cytoplasmic. The tract at residues 24-69 (EMTTRPSETKKKVPFSEDMREIPSLPNEEEANATDPQANEVADENG) is disordered. Residues 30-44 (SETKKKVPFSEDMRE) show a composition bias toward basic and acidic residues. The helical transmembrane segment at 77–97 (ISSWIWVLSAVAGISGLLFGY) threads the bilayer. The Extracellular segment spans residues 98 to 99 (DT). The helical transmembrane segment at 100–120 (GVISGALAVLGSDLGHVLSSG) threads the bilayer. Over 121–123 (QKE) the chain is Cytoplasmic. Residues 124-144 (LITSATSFAALISATTSGWLA) form a helical membrane-spanning segment. Residues 145–157 (DWVGRKRLLLCAD) are Extracellular-facing. A helical membrane pass occupies residues 158–178 (AIFVIGSVIMAASRNVAMMVV). Residues 179 to 180 (GR) lie on the Cytoplasmic side of the membrane. A helical transmembrane segment spans residues 181 to 201 (FIVGYGIGLTSLIVPMYITEL). Over 202 to 209 (APARLRGR) the chain is Extracellular. Residues 210-230 (LVIIYVVFITGGQLIAYSLNA) form a helical membrane-spanning segment. The Cytoplasmic segment spans residues 231 to 240 (AFEHVHQGWR). A helical transmembrane segment spans residues 241–261 (IMFGIGAAPALGQLISLFWTP). At 262–367 (ESPRYLLRHN…IFQSVGFKNS (106 aa)) the chain is on the extracellular side. A helical transmembrane segment spans residues 368-388 (ISVSIVVGATNFVFTIVAFMF). Residues 389-396 (IDRIGRRR) lie on the Cytoplasmic side of the membrane. Residues 397–417 (ILLCTSAVMIAGLALCAIAYH) traverse the membrane as a helical segment. Topologically, residues 418-432 (FLPADTTQNTNSGWQ) are extracellular. Residues 433–453 (YVVLASIIIFLASYASGIGNI) traverse the membrane as a helical segment. Topologically, residues 454-468 (PWQQAELFPMEVRAL) are cytoplasmic. A helical transmembrane segment spans residues 469–489 (GAGFSTAINWVGNLIISASFL). At 490-498 (TMMESITPT) the chain is on the extracellular side. A helical membrane pass occupies residues 499–519 (GTFALFAGFCFVGLVTSYFTY). Residues 520–557 (PELAGMSIENIHKLLEKGFWQAVKESTKRVRKGRIDEA) are Cytoplasmic-facing.

This sequence belongs to the major facilitator superfamily. Sugar transporter (TC 2.A.1.1) family.

Its subcellular location is the membrane. It carries out the reaction myo-inositol(out) + H(+)(out) = myo-inositol(in) + H(+)(in). Its function is as follows. Transporter for myo-inositol. In Schizosaccharomyces pombe (strain 972 / ATCC 24843) (Fission yeast), this protein is Myo-inositol transporter 2 (itr2).